A 413-amino-acid polypeptide reads, in one-letter code: Multifunctional CCA protein (413 aa).

ATP contacts are provided by Gly-8 and Arg-11. Residues Gly-8 and Arg-11 each contribute to the CTP site. The Mg(2+) site is built by Asp-21 and Asp-23. Positions 91, 137, and 140 each coordinate ATP. 3 residues coordinate CTP: Arg-91, Arg-137, and Arg-140. The 102-residue stretch at Thr-225–Tyr-326 folds into the HD domain.

Belongs to the tRNA nucleotidyltransferase/poly(A) polymerase family. Bacterial CCA-adding enzyme type 1 subfamily. In terms of assembly, monomer. Can also form homodimers and oligomers. The cofactor is Mg(2+). Ni(2+) serves as cofactor.

The catalysed reaction is a tRNA precursor + 2 CTP + ATP = a tRNA with a 3' CCA end + 3 diphosphate. It catalyses the reaction a tRNA with a 3' CCA end + 2 CTP + ATP = a tRNA with a 3' CCACCA end + 3 diphosphate. Functionally, catalyzes the addition and repair of the essential 3'-terminal CCA sequence in tRNAs without using a nucleic acid template. Adds these three nucleotides in the order of C, C, and A to the tRNA nucleotide-73, using CTP and ATP as substrates and producing inorganic pyrophosphate. tRNA 3'-terminal CCA addition is required both for tRNA processing and repair. Also involved in tRNA surveillance by mediating tandem CCA addition to generate a CCACCA at the 3' terminus of unstable tRNAs. While stable tRNAs receive only 3'-terminal CCA, unstable tRNAs are marked with CCACCA and rapidly degraded. This Nitrosospira multiformis (strain ATCC 25196 / NCIMB 11849 / C 71) protein is Multifunctional CCA protein.